Here is a 258-residue protein sequence, read N- to C-terminus: UPF0246 protein MS0374 (258 aa).

Belongs to the UPF0246 family.

This chain is UPF0246 protein MS0374, found in Mannheimia succiniciproducens (strain KCTC 0769BP / MBEL55E).